Here is a 104-residue protein sequence, read N- to C-terminus: Enhancer of rudimentary homolog 1 (104 aa).

This sequence belongs to the E(R) family. As to quaternary structure, homodimer. Component of the erh1-mmi1 complex. Interacts with mmi1 (via N-terminus) in a 2:2 stoichiometry.

Its subcellular location is the nucleus. It localises to the cytoplasm. Forms part of the erh1-mmi1 complex that recruits the CCR4-NOT complex and the NURS complex to target RNAs. Suppresses the meiotic program during vegetative growth and promotes the meiotic program during mating. Recruitment of the NURS complex to target mRNAs promotes mRNA decay by engagement of the nuclear exosome, and formation of heterochromatin islands at meiotic genes silenced by the exosome. Recruitment of the CCR4-NOT complex to target RNAs promotes heterochromatin formation at RNAi-dependent heterochromatin domains (HOODs), including a subset of meiotic genes, lncRNAs and retrotransposons. Recruitment of the CCR4-NOT complex to rDNA promotes rDNA heterochromatin assembly. The sequence is that of Enhancer of rudimentary homolog 1 from Schizosaccharomyces pombe (strain 972 / ATCC 24843) (Fission yeast).